A 320-amino-acid chain; its full sequence is Zygote arrest protein 1 (320 aa).

2 disordered regions span residues 106-130 (ELRRRRKLNPGPPGTPQKTEGEVRY) and 155-208 (DRPA…AEGS). The 3CxxC-type zinc-finger motif lies at 222–305 (KYGYYHCREC…RQDLCGRCKG (84 aa)).

Belongs to the ZAR1 family.

Its subcellular location is the cytoplasm. The protein localises to the cytoplasmic ribonucleoprotein granule. MRNA-binding protein required for maternal mRNA storage, translation and degradation during oocyte maturation. Probably promotes formation of some phase-separated membraneless compartment that stores maternal mRNAs in oocytes: acts by undergoing liquid-liquid phase separation upon binding to maternal mRNAs. Binds to the 3'-UTR of maternal mRNAs, inhibiting their translation. The sequence is that of Zygote arrest protein 1 from Takifugu rubripes (Japanese pufferfish).